The primary structure comprises 272 residues: Protein UL24 homolog (272 aa).

The protein belongs to the herpesviridae UL24 family.

It localises to the virion. Its subcellular location is the host cytoplasm. The protein localises to the host nucleus. It is found in the host nucleolus. The protein resides in the host Golgi apparatus. In terms of biological role, may participate in nuclear egress of viral particles. Plays a role in the dispersal of several host nucleolar proteins including NCL/nucleolin and NPM1. Since deletion of host NCL/nucleolin negatively impact on nuclear egress, UL24 supposedly acts on this process through its effect on host nucleoli. The polypeptide is Protein UL24 homolog (Equine herpesvirus 1 (strain V592) (EHV-1)).